The following is a 147-amino-acid chain: Male-specific protein scotti (147 aa).

Positions 57-76 (EPPLGVFPAQGGPNGPPRLR) are disordered. An N-linked (GlcNAc...) asparagine glycan is attached at Asn-128.

The protein belongs to the male-specific scotti family.

In terms of biological role, post-meiotically transcribed gene that has a role in late spermiogenesis; required for actin cone progression during spermatid individualization. The chain is Male-specific protein scotti from Drosophila simulans (Fruit fly).